The sequence spans 361 residues: Serpentine receptor class X 45 (361 aa).

A run of 7 helical transmembrane segments spans residues 20-40 (LLIF…AFYI), 58-78 (AAGD…VLFF), 92-112 (FAQL…VISL), 133-153 (TTFL…FLVI), 176-196 (MINV…MFAI), 242-262 (LLYV…PVPL), and 278-298 (LLTT…TLIF). A glycan (N-linked (GlcNAc...) asparagine) is linked at asparagine 317.

This sequence belongs to the G-protein coupled receptor 1 family.

The protein localises to the cell membrane. This is Serpentine receptor class X 45 (srx-45) from Caenorhabditis elegans.